The chain runs to 473 residues: Photosystem II CP43 reaction center protein (473 aa).

A propeptide spanning residues 1-14 (MKTLYSLRRFYHVE) is cleaved from the precursor. Thr-15 carries the post-translational modification N-acetylthreonine. Thr-15 bears the Phosphothreonine mark. A run of 5 helical transmembrane segments spans residues 69–93 (LFEVAHFVPEKPMYEQGLILLPHLA), 134–155 (LLGPETLEESFPFFGYVWKDRN), 178–200 (KALYFGGVYDTWAPGGGDVRKIT), 255–275 (KPFAWARRALVWSGEAYLSYS), and 291–312 (WFNNTAYPSEFYGPTGPEASQA). Residue Glu-367 coordinates [CaMn4O5] cluster. The helical transmembrane segment at 447–471 (RARAAAAGFEKGIDRDLEPVLFMTP) threads the bilayer.

Belongs to the PsbB/PsbC family. PsbC subfamily. PSII is composed of 1 copy each of membrane proteins PsbA, PsbB, PsbC, PsbD, PsbE, PsbF, PsbH, PsbI, PsbJ, PsbK, PsbL, PsbM, PsbT, PsbX, PsbY, PsbZ, Psb30/Ycf12, at least 3 peripheral proteins of the oxygen-evolving complex and a large number of cofactors. It forms dimeric complexes. It depends on Binds multiple chlorophylls and provides some of the ligands for the Ca-4Mn-5O cluster of the oxygen-evolving complex. It may also provide a ligand for a Cl- that is required for oxygen evolution. PSII binds additional chlorophylls, carotenoids and specific lipids. as a cofactor.

It is found in the plastid. The protein resides in the chloroplast thylakoid membrane. One of the components of the core complex of photosystem II (PSII). It binds chlorophyll and helps catalyze the primary light-induced photochemical processes of PSII. PSII is a light-driven water:plastoquinone oxidoreductase, using light energy to abstract electrons from H(2)O, generating O(2) and a proton gradient subsequently used for ATP formation. This is Photosystem II CP43 reaction center protein from Carica papaya (Papaya).